Consider the following 353-residue polypeptide: UPF0283 membrane protein YcjF (353 aa).

The next 3 membrane-spanning stretches (helical) occupy residues 70–90 (MVMG…VQWT), 100–120 (VALG…GSVV), and 213–233 (ESTL…FIAW).

Belongs to the UPF0283 family.

Its subcellular location is the cell inner membrane. This is UPF0283 membrane protein YcjF from Escherichia coli O139:H28 (strain E24377A / ETEC).